Here is a 179-residue protein sequence, read N- to C-terminus: MLKVEERYTNAVPELQKFFNYGNIMQVPKLVKVVINTGVGEAVSNSKAMETAEADIVAIAGQHPVVTRAKRSVANFKLRAGMPIGLKVTLRGQRMYDFLNKLFFITLPRVRDFQGVPNTAFDERGNYTLGFKDHSVFPEIDFNKIEKPRGLEICIVTTANTPEEGKKLLELLGMPFSKD.

This sequence belongs to the universal ribosomal protein uL5 family. Part of the 50S ribosomal subunit; part of the 5S rRNA/L5/L18/L25 subcomplex. Contacts the 5S rRNA and the P site tRNA. Forms a bridge to the 30S subunit in the 70S ribosome.

Its function is as follows. This is one of the proteins that bind and probably mediate the attachment of the 5S RNA into the large ribosomal subunit, where it forms part of the central protuberance. In the 70S ribosome it contacts protein S13 of the 30S subunit (bridge B1b), connecting the 2 subunits; this bridge is implicated in subunit movement. Contacts the P site tRNA; the 5S rRNA and some of its associated proteins might help stabilize positioning of ribosome-bound tRNAs. This is Large ribosomal subunit protein uL5 from Dehalococcoides mccartyi (strain ATCC BAA-2100 / JCM 16839 / KCTC 5957 / BAV1).